A 989-amino-acid chain; its full sequence is Bifunctional glutamine synthetase adenylyltransferase/adenylyl-removing enzyme (989 aa).

Positions 1–473 are adenylyl removase; the sequence is MRGPLEPDSA…HYANLFEDVA (473 aa). Residues 479-989 are adenylyl transferase; sequence DADLMFPPDE…FERILETAAE (511 aa).

It belongs to the GlnE family. Mg(2+) is required as a cofactor.

It catalyses the reaction [glutamine synthetase]-O(4)-(5'-adenylyl)-L-tyrosine + phosphate = [glutamine synthetase]-L-tyrosine + ADP. The enzyme catalyses [glutamine synthetase]-L-tyrosine + ATP = [glutamine synthetase]-O(4)-(5'-adenylyl)-L-tyrosine + diphosphate. Functionally, involved in the regulation of glutamine synthetase GlnA, a key enzyme in the process to assimilate ammonia. When cellular nitrogen levels are high, the C-terminal adenylyl transferase (AT) inactivates GlnA by covalent transfer of an adenylyl group from ATP to specific tyrosine residue of GlnA, thus reducing its activity. Conversely, when nitrogen levels are low, the N-terminal adenylyl removase (AR) activates GlnA by removing the adenylyl group by phosphorolysis, increasing its activity. The regulatory region of GlnE binds the signal transduction protein PII (GlnB) which indicates the nitrogen status of the cell. This Xanthobacter autotrophicus (strain ATCC BAA-1158 / Py2) protein is Bifunctional glutamine synthetase adenylyltransferase/adenylyl-removing enzyme.